A 341-amino-acid polypeptide reads, in one-letter code: Phenylalanine--tRNA ligase alpha subunit (341 aa).

E255 is a binding site for Mg(2+).

The protein belongs to the class-II aminoacyl-tRNA synthetase family. Phe-tRNA synthetase alpha subunit type 1 subfamily. As to quaternary structure, tetramer of two alpha and two beta subunits. Mg(2+) serves as cofactor.

It is found in the cytoplasm. The enzyme catalyses tRNA(Phe) + L-phenylalanine + ATP = L-phenylalanyl-tRNA(Phe) + AMP + diphosphate + H(+). The protein is Phenylalanine--tRNA ligase alpha subunit of Natranaerobius thermophilus (strain ATCC BAA-1301 / DSM 18059 / JW/NM-WN-LF).